The sequence spans 402 residues: Acetate kinase (402 aa).

Asn-10 contacts Mg(2+). Lys-17 contacts ATP. Arg-89 is a binding site for substrate. The Proton donor/acceptor role is filled by Asp-148. ATP is bound by residues 208 to 212, 283 to 285, and 334 to 338; these read HLGNG, DCR, and GIGEN. A Mg(2+)-binding site is contributed by Glu-389.

Belongs to the acetokinase family. In terms of assembly, homodimer. Mg(2+) is required as a cofactor. The cofactor is Mn(2+).

Its subcellular location is the cytoplasm. It carries out the reaction acetate + ATP = acetyl phosphate + ADP. The protein operates within metabolic intermediate biosynthesis; acetyl-CoA biosynthesis; acetyl-CoA from acetate: step 1/2. In terms of biological role, catalyzes the formation of acetyl phosphate from acetate and ATP. Can also catalyze the reverse reaction. The chain is Acetate kinase from Actinobacillus pleuropneumoniae serotype 7 (strain AP76).